The sequence spans 288 residues: Thymidylate synthase (288 aa).

Residue Arg21 participates in dUMP binding. Asn51 contacts (6R)-5,10-methylene-5,6,7,8-tetrahydrofolate. 150-151 (RR) is a binding site for dUMP. Cys170 acts as the Nucleophile in catalysis. Residues 190-193 (RSGD), Asn201, and 231-233 (HIY) contribute to the dUMP site. Asp193 lines the (6R)-5,10-methylene-5,6,7,8-tetrahydrofolate pocket. Ala287 provides a ligand contact to (6R)-5,10-methylene-5,6,7,8-tetrahydrofolate.

It belongs to the thymidylate synthase family. Bacterial-type ThyA subfamily. In terms of assembly, homodimer.

It localises to the cytoplasm. The enzyme catalyses dUMP + (6R)-5,10-methylene-5,6,7,8-tetrahydrofolate = 7,8-dihydrofolate + dTMP. The protein operates within pyrimidine metabolism; dTTP biosynthesis. Functionally, catalyzes the reductive methylation of 2'-deoxyuridine-5'-monophosphate (dUMP) to 2'-deoxythymidine-5'-monophosphate (dTMP) while utilizing 5,10-methylenetetrahydrofolate (mTHF) as the methyl donor and reductant in the reaction, yielding dihydrofolate (DHF) as a by-product. This enzymatic reaction provides an intracellular de novo source of dTMP, an essential precursor for DNA biosynthesis. The polypeptide is Thymidylate synthase (Phytoplasma mali (strain AT)).